We begin with the raw amino-acid sequence, 252 residues long: D-aminoacyl-tRNA deacylase (252 aa).

Belongs to the DtdA deacylase family. Monomer. Zn(2+) is required as a cofactor.

It carries out the reaction a D-aminoacyl-tRNA + H2O = a tRNA + a D-alpha-amino acid + H(+). It catalyses the reaction glycyl-tRNA(Ala) + H2O = tRNA(Ala) + glycine + H(+). Functionally, D-aminoacyl-tRNA deacylase with broad substrate specificity. By recycling D-aminoacyl-tRNA to D-amino acids and free tRNA molecules, this enzyme counteracts the toxicity associated with the formation of D-aminoacyl-tRNA entities in vivo. The polypeptide is D-aminoacyl-tRNA deacylase (Pyrobaculum neutrophilum (strain DSM 2338 / JCM 9278 / NBRC 100436 / V24Sta) (Thermoproteus neutrophilus)).